Reading from the N-terminus, the 500-residue chain is Probable cytosol aminopeptidase (500 aa).

Positions 264 and 269 each coordinate Mn(2+). Residue K276 is part of the active site. Mn(2+) contacts are provided by D287, D346, and E348. R350 is a catalytic residue.

It belongs to the peptidase M17 family. It depends on Mn(2+) as a cofactor.

It is found in the cytoplasm. The enzyme catalyses Release of an N-terminal amino acid, Xaa-|-Yaa-, in which Xaa is preferably Leu, but may be other amino acids including Pro although not Arg or Lys, and Yaa may be Pro. Amino acid amides and methyl esters are also readily hydrolyzed, but rates on arylamides are exceedingly low.. It catalyses the reaction Release of an N-terminal amino acid, preferentially leucine, but not glutamic or aspartic acids.. In terms of biological role, presumably involved in the processing and regular turnover of intracellular proteins. Catalyzes the removal of unsubstituted N-terminal amino acids from various peptides. The sequence is that of Probable cytosol aminopeptidase from Rhodopseudomonas palustris (strain ATCC BAA-98 / CGA009).